The chain runs to 300 residues: Inosose dehydratase (300 aa).

Belongs to the IolE/MocC family. Requires glutathione as cofactor. Co(2+) serves as cofactor. Mn(2+) is required as a cofactor.

The enzyme catalyses scyllo-inosose = 3D-3,5/4-trihydroxycyclohexane-1,2-dione + H2O. In terms of biological role, catalyzes the dehydration of inosose (2-keto-myo-inositol, 2KMI or 2,4,6/3,5-pentahydroxycyclohexanone) to 3D-(3,5/4)-trihydroxycyclohexane-1,2-dione (D-2,3-diketo-4-deoxy-epi-inositol). In Mesomycoplasma hyopneumoniae (strain 232) (Mycoplasma hyopneumoniae), this protein is Inosose dehydratase.